A 362-amino-acid polypeptide reads, in one-letter code: Shewanella-like protein phosphatase 1 (362 aa).

An N-terminal signal peptide occupies residues 1-23 (MIFKKALYILLFLYIAIVKKGES). Mn(2+) is bound by residues Asp-65, His-67, Asp-101, and Asn-136. The active-site Proton donor is the His-137. His-196 contacts Mn(2+).

The protein belongs to the metallophosphoesterase superfamily. SLP family. Mn(2+) serves as cofactor.

Phosphatase which plays an essential role in the development and differentiation of the ookinete and in the formation of ookinete micronemes. The chain is Shewanella-like protein phosphatase 1 from Plasmodium berghei (strain Anka).